We begin with the raw amino-acid sequence, 159 residues long: 6,7-dimethyl-8-ribityllumazine synthase (159 aa).

5-amino-6-(D-ribitylamino)uracil contacts are provided by residues tryptophan 28, 59-61, and 81-83; these read ALE and CVI. 86–87 is a binding site for (2S)-2-hydroxy-3-oxobutyl phosphate; that stretch reads GT. Histidine 89 (proton donor) is an active-site residue. Residue asparagine 114 coordinates 5-amino-6-(D-ribitylamino)uracil. Arginine 128 contributes to the (2S)-2-hydroxy-3-oxobutyl phosphate binding site.

It belongs to the DMRL synthase family.

The enzyme catalyses (2S)-2-hydroxy-3-oxobutyl phosphate + 5-amino-6-(D-ribitylamino)uracil = 6,7-dimethyl-8-(1-D-ribityl)lumazine + phosphate + 2 H2O + H(+). Its pathway is cofactor biosynthesis; riboflavin biosynthesis; riboflavin from 2-hydroxy-3-oxobutyl phosphate and 5-amino-6-(D-ribitylamino)uracil: step 1/2. Catalyzes the formation of 6,7-dimethyl-8-ribityllumazine by condensation of 5-amino-6-(D-ribitylamino)uracil with 3,4-dihydroxy-2-butanone 4-phosphate. This is the penultimate step in the biosynthesis of riboflavin. This is 6,7-dimethyl-8-ribityllumazine synthase from Corynebacterium kroppenstedtii (strain DSM 44385 / JCM 11950 / CIP 105744 / CCUG 35717).